The chain runs to 621 residues: DnaJ homolog subfamily C member 2 (621 aa).

Met1 carries the N-acetylmethionine modification. Ser47, Ser49, Ser60, and Ser63 each carry phosphoserine. The 74-residue stretch at 88 to 161 (DHYAVLGLGH…VKRRAFNSVD (74 aa)) folds into the J domain. The tract at residues 160–250 (VDPTFDNSVP…RDERRWIEKQ (91 aa)) is ZRF1-UBD. Ser183 is modified (phosphoserine). Disordered regions lie at residues 294–315 (EKKAKADAKRKEQEAKEKQRQA) and 426–453 (KEEAEARMRQASKNAEKSAGGGGNGSKH). SANT domains follow at residues 449 to 511 (NGSK…KLDP) and 549 to 604 (TDFT…EMVK).

Component of ribosome-associated complex (RAC), a heterodimer composed of Hsp70/DnaK-type chaperone HSPA14 and Hsp40/DnaJ-type chaperone DNAJC2. Interacts (via ZRF1-UBD region) with ID1. Post-translationally, phosphorylated in M (mitotic) phase.

Its subcellular location is the nucleus. The protein resides in the cytoplasm. It is found in the cytosol. Its function is as follows. Acts both as a chaperone in the cytosol and as a chromatin regulator in the nucleus. When cytosolic, acts as a molecular chaperone: component of the ribosome-associated complex (RAC), a complex involved in folding or maintaining nascent polypeptides in a folding-competent state. In the RAC complex, stimulates the ATPase activity of the ribosome-associated pool of Hsp70-type chaperones HSPA14 that bind to the nascent polypeptide chain. When nuclear, mediates the switching from polycomb-repressed genes to an active state: specifically recruited at histone H2A ubiquitinated at 'Lys-119' (H2AK119ub), and promotes the displacement of the polycomb PRC1 complex from chromatin, thereby facilitating transcription activation. This chain is DnaJ homolog subfamily C member 2 (DNAJC2), found in Bos taurus (Bovine).